The primary structure comprises 212 residues: Adenylate kinase (212 aa).

Residue 10–15 participates in ATP binding; it reads GAGKGT. Residues 30-59 are NMP; it reads STGDMFRAAMANQTEMGRLAKSYIDKGELV. AMP-binding positions include T31, R36, 57–59, 86–89, and Q93; these read ELV and GYPR. An LID region spans residues 127 to 159; that stretch reads GRIINRKTGETFHKVFNPPVDYKEEDYYQREDD. Residues R128 and 137-138 contribute to the ATP site; that span reads TF. Residues R156 and R167 each coordinate AMP. Q195 serves as a coordination point for ATP.

This sequence belongs to the adenylate kinase family. As to quaternary structure, monomer.

It localises to the cytoplasm. It catalyses the reaction AMP + ATP = 2 ADP. It functions in the pathway purine metabolism; AMP biosynthesis via salvage pathway; AMP from ADP: step 1/1. Its function is as follows. Catalyzes the reversible transfer of the terminal phosphate group between ATP and AMP. Plays an important role in cellular energy homeostasis and in adenine nucleotide metabolism. This Streptococcus pyogenes serotype M12 (strain MGAS2096) protein is Adenylate kinase.